Consider the following 395-residue polypeptide: Putative ankyrin repeat protein RF_0950 (395 aa).

7 ANK repeats span residues 3–32, 36–65, 69–98, 101–130, 134–166, 172–201, and 205–234; these read YQKE…NPNT, YGKL…DPNA, IKDP…NPNV, RHEN…DPNQ, NGNT…EKAL, NGET…TVNI, and AGNT…ELNE. Positions 272–395 constitute a Glutamine amidotransferase type-1 domain; sequence KTKLIYQGGD…YLKVPILKEK (124 aa). The Nucleophile role is filled by Cys377.

This chain is Putative ankyrin repeat protein RF_0950, found in Rickettsia felis (strain ATCC VR-1525 / URRWXCal2) (Rickettsia azadi).